The primary structure comprises 186 residues: Peptidyl-tRNA hydrolase (186 aa).

Tyrosine 14 lines the tRNA pocket. Catalysis depends on histidine 19, which acts as the Proton acceptor. 3 residues coordinate tRNA: tyrosine 61, asparagine 63, and asparagine 107.

It belongs to the PTH family. Monomer.

The protein localises to the cytoplasm. The catalysed reaction is an N-acyl-L-alpha-aminoacyl-tRNA + H2O = an N-acyl-L-amino acid + a tRNA + H(+). Functionally, hydrolyzes ribosome-free peptidyl-tRNAs (with 1 or more amino acids incorporated), which drop off the ribosome during protein synthesis, or as a result of ribosome stalling. In terms of biological role, catalyzes the release of premature peptidyl moieties from peptidyl-tRNA molecules trapped in stalled 50S ribosomal subunits, and thus maintains levels of free tRNAs and 50S ribosomes. The sequence is that of Peptidyl-tRNA hydrolase from Helicobacter acinonychis (strain Sheeba).